Reading from the N-terminus, the 988-residue chain is UPF0182 protein MAB_3498c (988 aa).

A run of 7 helical transmembrane segments spans residues 19-39 (LVAA…LVDT), 63-83 (LALF…GFGL), 114-134 (LFLI…AQSY), 176-196 (FIAA…FGGI), 211-231 (IQLI…YWLD), 260-280 (KLIL…ALVL), and 288-308 (IGLA…PLIV).

The protein belongs to the UPF0182 family.

It is found in the cell membrane. The protein is UPF0182 protein MAB_3498c of Mycobacteroides abscessus (strain ATCC 19977 / DSM 44196 / CCUG 20993 / CIP 104536 / JCM 13569 / NCTC 13031 / TMC 1543 / L948) (Mycobacterium abscessus).